The sequence spans 207 residues: Holliday junction branch migration complex subunit RuvA (207 aa).

The domain I stretch occupies residues 1 to 64 (MIGRLRGNLL…EDAQLLYGFN (64 aa)). Positions 65-143 (TKNERALFRE…GWGAGDLFTP (79 aa)) are domain II. Positions 144–158 (ATDAAPMDDGSEFIT) are flexible linker. Residues 159-207 (SPQSAVDEAVSALIALGYKPQQASKTVSQVAKPDMTSEVLIRESLKSMI) form a domain III region.

This sequence belongs to the RuvA family. As to quaternary structure, homotetramer. Forms an RuvA(8)-RuvB(12)-Holliday junction (HJ) complex. HJ DNA is sandwiched between 2 RuvA tetramers; dsDNA enters through RuvA and exits via RuvB. An RuvB hexamer assembles on each DNA strand where it exits the tetramer. Each RuvB hexamer is contacted by two RuvA subunits (via domain III) on 2 adjacent RuvB subunits; this complex drives branch migration. In the full resolvosome a probable DNA-RuvA(4)-RuvB(12)-RuvC(2) complex forms which resolves the HJ.

It is found in the cytoplasm. Functionally, the RuvA-RuvB-RuvC complex processes Holliday junction (HJ) DNA during genetic recombination and DNA repair, while the RuvA-RuvB complex plays an important role in the rescue of blocked DNA replication forks via replication fork reversal (RFR). RuvA specifically binds to HJ cruciform DNA, conferring on it an open structure. The RuvB hexamer acts as an ATP-dependent pump, pulling dsDNA into and through the RuvAB complex. HJ branch migration allows RuvC to scan DNA until it finds its consensus sequence, where it cleaves and resolves the cruciform DNA. The polypeptide is Holliday junction branch migration complex subunit RuvA (Aliivibrio fischeri (strain MJ11) (Vibrio fischeri)).